The chain runs to 311 residues: Methionyl-tRNA formyltransferase (311 aa).

Residue Ser110–Pro113 coordinates (6S)-5,6,7,8-tetrahydrofolate.

It belongs to the Fmt family.

The catalysed reaction is L-methionyl-tRNA(fMet) + (6R)-10-formyltetrahydrofolate = N-formyl-L-methionyl-tRNA(fMet) + (6S)-5,6,7,8-tetrahydrofolate + H(+). Functionally, attaches a formyl group to the free amino group of methionyl-tRNA(fMet). The formyl group appears to play a dual role in the initiator identity of N-formylmethionyl-tRNA by promoting its recognition by IF2 and preventing the misappropriation of this tRNA by the elongation apparatus. In Streptococcus pyogenes serotype M1, this protein is Methionyl-tRNA formyltransferase.